A 401-amino-acid chain; its full sequence is SVP1-like protein 2 (401 aa).

2 WD repeats span residues 222 to 262 (AHKN…LIHE) and 267 to 306 (LDRA…DKRH).

It belongs to the WD repeat PROPPIN family.

The protein resides in the vacuole membrane. It is found in the cytoplasmic vesicle membrane. Its function is as follows. Involved in mitochondrial or peroxisomal functions and amino acid signaling pathways. The sequence is that of SVP1-like protein 2 (HSV2) from Eremothecium gossypii (strain ATCC 10895 / CBS 109.51 / FGSC 9923 / NRRL Y-1056) (Yeast).